Here is a 125-residue protein sequence, read N- to C-terminus: UPF0738 protein GTNG_0708 (125 aa).

The protein belongs to the UPF0738 family.

This Geobacillus thermodenitrificans (strain NG80-2) protein is UPF0738 protein GTNG_0708.